Here is a 274-residue protein sequence, read N- to C-terminus: Bis(5'-nucleosyl)-tetraphosphatase, symmetrical (274 aa).

The protein belongs to the Ap4A hydrolase family.

The enzyme catalyses P(1),P(4)-bis(5'-adenosyl) tetraphosphate + H2O = 2 ADP + 2 H(+). In terms of biological role, hydrolyzes diadenosine 5',5'''-P1,P4-tetraphosphate to yield ADP. The protein is Bis(5'-nucleosyl)-tetraphosphatase, symmetrical of Janthinobacterium sp. (strain Marseille) (Minibacterium massiliensis).